The following is a 94-amino-acid chain: DNA-binding protein HU (94 aa).

The disordered stretch occupies residues 56-94 (QKGKEGKVPGSDKTYKTEDKRVPKFKPGKTLKQKVEEGK). Residues 68–77 (KTYKTEDKRV) are compositionally biased toward basic and acidic residues. Residues 78 to 87 (PKFKPGKTLK) are compositionally biased toward basic residues.

The protein belongs to the bacterial histone-like protein family. In terms of assembly, homodimer.

In terms of biological role, histone-like DNA-binding protein which is capable of wrapping DNA to stabilize it, and thus to prevent its denaturation under extreme environmental conditions. This Helicobacter pylori (strain ATCC 700392 / 26695) (Campylobacter pylori) protein is DNA-binding protein HU (hup).